Here is a 284-residue protein sequence, read N- to C-terminus: MCVVSTKQMLNNAQRGGYAVPAFNIHNLETMQVVVETAANLHAPVIIAGTPGTFTHAGTENLLALVSAMAKQYHHPLAIHLDHHTKFDDIAQKVRSGVRSVMIDASHLPFAQNISRVKEVVDFCHRFDVSVEAELGQLGGQEDDVQVNEADAFYTNPAQAREFAEATGIDSLAVAIGTAHGMYASAPALDFSRLENIRQWVNLPLVLHGASGLSTKDIQQTIKLGICKINVATELKNAFSQALKNYLTEHPEATDPRDYLQSAKSAMRDVVSKVIADCGCEGRA.

Aspartate 82 serves as the catalytic Proton donor. Histidine 83 and histidine 180 together coordinate Zn(2+). Dihydroxyacetone phosphate is bound at residue glycine 181. Histidine 208 contacts Zn(2+). Residues glycine 209–serine 211 and asparagine 230–threonine 233 each bind dihydroxyacetone phosphate.

This sequence belongs to the class II fructose-bisphosphate aldolase family. TagBP aldolase GatY subfamily. As to quaternary structure, forms a complex with GatZ. Zn(2+) serves as cofactor.

It carries out the reaction D-tagatofuranose 1,6-bisphosphate = D-glyceraldehyde 3-phosphate + dihydroxyacetone phosphate. The protein operates within carbohydrate metabolism; D-tagatose 6-phosphate degradation; D-glyceraldehyde 3-phosphate and glycerone phosphate from D-tagatose 6-phosphate: step 2/2. Its function is as follows. Catalytic subunit of the tagatose-1,6-bisphosphate aldolase GatYZ, which catalyzes the reversible aldol condensation of dihydroxyacetone phosphate (DHAP or glycerone-phosphate) with glyceraldehyde 3-phosphate (G3P) to produce tagatose 1,6-bisphosphate (TBP). Requires GatZ subunit for full activity and stability. Is involved in the catabolism of galactitol. In Escherichia coli (strain 55989 / EAEC), this protein is D-tagatose-1,6-bisphosphate aldolase subunit GatY.